We begin with the raw amino-acid sequence, 341 residues long: Elongation factor Ts, mitochondrial 2 (341 aa).

Residues Met-1–Tyr-17 constitute a mitochondrion transit peptide.

The protein belongs to the EF-Ts family.

The protein localises to the mitochondrion. Functionally, associates with the EF-Tu.GDP complex and induces the exchange of GDP to GTP. It remains bound to the aminoacyl-tRNA.EF-Tu.GTP complex up to the GTP hydrolysis stage on the ribosome. This Postia placenta (strain ATCC 44394 / Madison 698-R) (Brown rot fungus) protein is Elongation factor Ts, mitochondrial 2.